Here is a 400-residue protein sequence, read N- to C-terminus: Acetate kinase (400 aa).

Asparagine 7 provides a ligand contact to Mg(2+). Lysine 14 lines the ATP pocket. Arginine 91 provides a ligand contact to substrate. The active-site Proton donor/acceptor is the aspartate 148. Residues 208–212 (HLGNG), 284–286 (DMR), and 332–336 (GVGEN) contribute to the ATP site. Glutamate 384 contacts Mg(2+).

The protein belongs to the acetokinase family. In terms of assembly, homodimer. It depends on Mg(2+) as a cofactor. Mn(2+) is required as a cofactor.

Its subcellular location is the cytoplasm. The catalysed reaction is acetate + ATP = acetyl phosphate + ADP. Its pathway is metabolic intermediate biosynthesis; acetyl-CoA biosynthesis; acetyl-CoA from acetate: step 1/2. In terms of biological role, catalyzes the formation of acetyl phosphate from acetate and ATP. Can also catalyze the reverse reaction. The protein is Acetate kinase of Coprothermobacter proteolyticus (strain ATCC 35245 / DSM 5265 / OCM 4 / BT).